The following is a 214-amino-acid chain: uncharacterized protein (214 aa).

Residues methionine 1–alanine 49 constitute a chloroplast transit peptide.

Its subcellular location is the plastid. It localises to the chloroplast. This is an uncharacterized protein from Arabidopsis thaliana (Mouse-ear cress).